We begin with the raw amino-acid sequence, 174 residues long: Major allergen Can f 1 (174 aa).

The signal sequence occupies residues 1–18 (MKTLLLTIGFSLIAILQA). Cysteines 78 and 169 form a disulfide. N80 is a glycosylation site (N-linked (GlcNAc...) asparagine).

This sequence belongs to the calycin superfamily. Lipocalin family. As to expression, tongue epithelial tissue.

It is found in the secreted. The protein is Major allergen Can f 1 of Canis lupus familiaris (Dog).